The following is a 444-amino-acid chain: 23S rRNA (uracil(1939)-C(5))-methyltransferase RlmD (444 aa).

Residues Arg-5–Glu-67 enclose the TRAM domain. Residues Cys-80, Cys-86, Cys-89, and Cys-168 each contribute to the [4Fe-4S] cluster site. 6 residues coordinate S-adenosyl-L-methionine: Gln-276, Phe-305, Asn-310, Glu-326, Asp-353, and Asp-374. Cys-400 acts as the Nucleophile in catalysis.

This sequence belongs to the class I-like SAM-binding methyltransferase superfamily. RNA M5U methyltransferase family. RlmD subfamily.

The catalysed reaction is uridine(1939) in 23S rRNA + S-adenosyl-L-methionine = 5-methyluridine(1939) in 23S rRNA + S-adenosyl-L-homocysteine + H(+). Its function is as follows. Catalyzes the formation of 5-methyl-uridine at position 1939 (m5U1939) in 23S rRNA. The protein is 23S rRNA (uracil(1939)-C(5))-methyltransferase RlmD of Stenotrophomonas maltophilia (strain R551-3).